A 1055-amino-acid chain; its full sequence is RapA guanosine triphosphatase-activating protein 1 (1055 aa).

6 disordered regions span residues Leu76–Arg100, Asn256–Thr292, Gln418–Val525, Thr544–Leu570, Thr603–Glu629, and Asn943–Thr969. A compositionally biased stretch (basic and acidic residues) spans Gln89 to Arg100. 3 stretches are compositionally biased toward low complexity: residues Ser262–Thr292, Asp442–Asn455, and Thr469–Asn482. Over residues Ile483–Pro494 the composition is skewed to polar residues. Composition is skewed to low complexity over residues Thr603–Pro622 and Asn943–Asn966. The 270-residue stretch at Leu779–Phe1048 folds into the Rap-GAP domain.

Its subcellular location is the cytoplasm. The protein localises to the cell cortex. Mediates the deactivation of rap1 and plays an important role in spatially and temporally regulating cell adhesion and chemotaxis by controlling attachment disassembly in the leading edge through the regulation of myosin II assembly and disassembly. Overexpression leads to defective chemotaxis. This Dictyostelium discoideum (Social amoeba) protein is RapA guanosine triphosphatase-activating protein 1 (rapgap1).